The following is a 797-amino-acid chain: Ubiquitin carboxyl-terminal hydrolase 14 (797 aa).

A UBP-type; degenerate zinc finger spans residues 156-266 (LISEHALTLQ…EHLAHFGIDF (111 aa)). Residues Cys180, Cys183, Cys200, and His213 each coordinate Zn(2+). The region spanning 308-796 (TGLVNLGNSC…MGYVYFFQRL (489 aa)) is the USP domain. Residue Cys317 is the Nucleophile of the active site. UBA domains follow at residues 613-654 (VANE…LLSH) and 670-710 (DIDQ…VFNN). The active-site Proton acceptor is His758.

Belongs to the peptidase C19 family. As to expression, constitutively and ubiquitously expressed (at protein level).

The enzyme catalyses Thiol-dependent hydrolysis of ester, thioester, amide, peptide and isopeptide bonds formed by the C-terminal Gly of ubiquitin (a 76-residue protein attached to proteins as an intracellular targeting signal).. Functionally, recognizes and hydrolyzes the peptide bond at the C-terminal Gly of ubiquitin. Involved in the processing of poly-ubiquitin precursors as well as that of ubiquitinated proteins. Involved in seed and embryo development. The polypeptide is Ubiquitin carboxyl-terminal hydrolase 14 (UBP14) (Arabidopsis thaliana (Mouse-ear cress)).